A 362-amino-acid chain; its full sequence is 2-oxoglutarate-dependent dioxygenase lolO2 (362 aa).

The 114-residue stretch at 199-312 (TWNYFLGQPV…RYSLVFFGHL (114 aa)) folds into the Fe2OG dioxygenase domain. 3 residues coordinate Fe cation: histidine 222, aspartate 224, and histidine 280. Residue arginine 303 participates in 2-oxoglutarate binding.

Belongs to the iron/ascorbate-dependent oxidoreductase family. Requires Fe(2+) as cofactor.

The protein operates within alkaloid biosynthesis. In terms of biological role, 2-oxoglutarate-dependent dioxygenase; part of the gene cluster that mediates the biosynthesis of loline alkaloids, potent insecticidal agents composed of a pyrrolizidine ring system and an uncommon ether bridge linking carbons 2 and 7. Lolines are structurally differentiated by the various modifications of the L-amino group and include norloline, loline, N-methylloline, N-acetylloline, N-acetylnorloline, and N-formylloline. The first committed step is the condensation of O-acetyl-L-homoserine (derived from L-aspartic acid) and L-proline, probably catalyzed by the gamma-type pyridoxal 5'-phosphate(PLP)-dependent enzyme lolC, to give the diamino diacid, NACPP. Ensuing cyclization, decarboxylation, and acetylation steps yield 1-exo-acetamidopyrrolizidine (AcAP). LolO is required for installation of the ether bridge upon the pathway intermediate, 1-exo-acetamidopyrrolizidine (AcAP). In sequential 2-oxoglutarate- and O(2)-consuming steps, lolO removes hydrogens from C2 and C7 of AcAP to form both carbon-oxygen bonds in N-acetylnorloline (NANL), the precursor to all other lolines. The enzymes lolD, lolE, lolF and lolT have also been proposed to be involved in the ether-bridge installation. Further processing of the exocyclic moiety of NANL by fungal N-acetamidase (LolN), methyltransferase (LolM), and cytochrome P450 (LolP) enzymes, with occasional involvement of a plant acetyltransferase, generates the other known lolines. LolN transforms NANL to norlonine which is monomethylated and dimethylated to respectively lonine and N-methyllonine (NML) by lolM. LolP catalyzes hydroxylation of the methyl group in N-methylloline (NML) and further oxygenation to N-formylloline (NFL). A plant acetyltransferase is responsible for the acetylation of loline to form N-acetylloline (NAL). LolA might interact with aspartate kinase to prevent feedback inhibition of its activity by these end products and thereby promote production of L-homoserine from L-aspartate. The protein is 2-oxoglutarate-dependent dioxygenase lolO2 of Epichloe uncinata (Endophyte fungus).